The primary structure comprises 131 residues: Translation initiation factor 5A (131 aa).

A Hypusine modification is found at Lys37.

This sequence belongs to the eIF-5A family.

Its subcellular location is the cytoplasm. Its function is as follows. Functions by promoting the formation of the first peptide bond. This Methanococcus vannielii (strain ATCC 35089 / DSM 1224 / JCM 13029 / OCM 148 / SB) protein is Translation initiation factor 5A (eIF5A).